The following is a 72-amino-acid chain: SRY-related protein AES4 (72 aa).

The segment at residues 1 to 69 (VKRPMNAFMV…KHMADYPDYK (69 aa)) is a DNA-binding region (HMG box).

It is found in the nucleus. The protein is SRY-related protein AES4 of Alligator mississippiensis (American alligator).